Here is a 307-residue protein sequence, read N- to C-terminus: Malate dehydrogenase (307 aa).

Residues 8 to 13 and Asp-33 contribute to the NAD(+) site; that span reads GAGRVG. Residues Arg-82 and Arg-88 each contribute to the substrate site. NAD(+)-binding positions include Asn-95 and 118–120; that span reads VSN. Substrate contacts are provided by Asn-120 and Arg-151. The active-site Proton acceptor is the His-175.

The protein belongs to the LDH/MDH superfamily. MDH type 3 family.

The catalysed reaction is (S)-malate + NAD(+) = oxaloacetate + NADH + H(+). Its function is as follows. Catalyzes the reversible oxidation of malate to oxaloacetate. The polypeptide is Malate dehydrogenase (Thioalkalivibrio sulfidiphilus (strain HL-EbGR7)).